Here is a 386-residue protein sequence, read N- to C-terminus: S-(hydroxymethyl)glutathione dehydrogenase (386 aa).

Ser-2 is subject to N-acetylserine. Residue Cys-49 coordinates Zn(2+). Residue His-50 participates in NAD(+) binding. Residues His-71, Glu-72, Cys-101, Cys-104, Cys-107, Cys-115, and Cys-179 each contribute to the Zn(2+) site. Residues 204–209, Asp-228, 300–302, and 325–327 contribute to the NAD(+) site; these read GCGTVG, IGV, and SAF.

Belongs to the zinc-containing alcohol dehydrogenase family. Class-III subfamily. Zn(2+) is required as a cofactor.

It is found in the cytoplasm. The protein resides in the mitochondrion. The catalysed reaction is a primary alcohol + NAD(+) = an aldehyde + NADH + H(+). It carries out the reaction a secondary alcohol + NAD(+) = a ketone + NADH + H(+). It catalyses the reaction S-(hydroxymethyl)glutathione + NADP(+) = S-formylglutathione + NADPH + H(+). The enzyme catalyses S-(hydroxymethyl)glutathione + NAD(+) = S-formylglutathione + NADH + H(+). The catalysed reaction is S-nitrosoglutathione + NADH + H(+) = S-(hydroxysulfenamide)glutathione + NAD(+). Oxidizes long-chain alcohols and, in the presence of glutathione, is able to oxidize formaldehyde. Is responsible for yeast resistance to formaldehyde. Also acts as a S-nitroso-glutathione reductase by catalyzing the NADH-dependent reduction of S-nitrosoglutathione, thereby regulating protein S-nitrosylation. The chain is S-(hydroxymethyl)glutathione dehydrogenase (SFA1) from Saccharomyces cerevisiae (strain ATCC 204508 / S288c) (Baker's yeast).